Reading from the N-terminus, the 926-residue chain is Progesterone receptor (926 aa).

Residues 1–48 form a disordered region; it reads MTELQAKDPQVLHTSGASPSPPHIGSPLLARLDSGPFQGSQHSDVSSV. Residues 1 to 165 form an AF3; mediates transcriptional activation (in isoform B) region; sequence MTELQAKDPQ…PATKGLLSPL (165 aa). A modulating, Pro-Rich region spans residues 1–559; it reads MTELQAKDPQ…YGFDSLPQKI (559 aa). Residue Lys-7 forms a Glycyl lysine isopeptide (Lys-Gly) (interchain with G-Cter in SUMO) linkage. At Ser-20 the chain carries Phosphoserine. Residues 56 to 60 carry the LXXL motif 1 motif; sequence LDGLL. Ser-82 is subject to Phosphoserine. Positions 116-120 match the LXXL motif 1 motif; the sequence is LDSLL. Residues Ser-131 and Ser-163 each carry the phosphoserine modification. Residues 166–305 are mediates transcriptional transrepression (in isoform A); that stretch reads MSRPEIKAGD…LATTVVDFIH (140 aa). The interval 168-256 is disordered; the sequence is RPEIKAGDSS…GTGSGGGVAA (89 aa). Positions 184 to 188 match the Nuclear localization signal motif; that stretch reads KVLPK. Phosphoserine is present on residues Ser-191 and Ser-214. Phosphoserine; by MAPK1 is present on Ser-294. A disordered region spans residues 327–364; the sequence is DSYDGGATAQGPFAPPRGSPSAPSPPVPCGDFPDCTYP. Pro residues predominate over residues 339–354; that stretch reads FAPPRGSPSAPSPPVP. Ser-345 carries the phosphoserine; by MAPK modification. Residue Lys-388 forms a Glycyl lysine isopeptide (Lys-Gly) (interchain with G-Cter in SUMO); alternate linkage. Lys-388 is covalently cross-linked (Glycyl lysine isopeptide (Lys-Gly) (interchain with G-Cter in ubiquitin); alternate). The interval 391 to 447 is disordered; sequence EEGADAAVRSPRPYLSAGASSSTFPDFPLAPAPQRAPSSRPGEAAVAGGPSSAAVSP. Ser-400 carries the phosphoserine; by CDK2 modification. Residues 422–447 show a composition bias toward low complexity; that stretch reads APQRAPSSRPGEAAVAGGPSSAAVSP. The segment at 453 to 539 is AF1; mediates transcriptional activation; that stretch reads SALECILYKA…VYPPYLNYLR (87 aa). Lys-524 participates in a covalent cross-link: Glycyl lysine isopeptide (Lys-Gly) (interchain with G-Cter in SUMO). The nuclear receptor DNA-binding region spans 557 to 632; that stretch reads QKICLICGDE…AGMVLGGRKF (76 aa). NR C4-type zinc fingers lie at residues 560–580 and 596–615; these read CLICGDEASGCHYGVLTCGSC and CAGRNDCIVDKIRRKNCPAC. The residue at position 669 (Ser-669) is a Phosphoserine. The region spanning 672-906 is the NR LBD domain; it reads QEIQLVPPLI…EFPEMMSEVI (235 aa). Residues 673 to 926 are AF2; mediates transcriptional activation; the sequence is EIQLVPPLIN…MVKPLLFHKK (254 aa). Residue Arg-759 participates in progesterone binding.

Belongs to the nuclear hormone receptor family. NR3 subfamily. In terms of assembly, interacts with SMARD1 and UNC45A. Interacts with CUEDC2; the interaction promotes ubiquitination, decreases sumoylation, and represses transcriptional activity. Interacts with PIAS3; the interaction promotes sumoylation of PR in a hormone-dependent manner, inhibits DNA-binding, and alters nuclear export. Interacts with SP1; the interaction requires ligand-induced phosphorylation on Ser-294 by ERK1/2 MAPK. Interacts with PRMT2. Isoform A interacts with NCOR2. Isoform B (but not isoform A) interacts with NCOA2 and NCOA1. Isoform B (but not isoform A) interacts with KLF9. Phosphorylated on multiple serine sites. Several of these sites are hormone-dependent. Phosphorylation on Ser-294 is highly hormone-dependent and modulates ubiquitination and sumoylation on Lys-388. Phosphorylation on Ser-345 also requires induction by hormone. Basal phosphorylation on Ser-82, Ser-163, Ser-191 and Ser-400 is increased in response to progesterone and can be phosphorylated in vitro by the CDK2-A1 complex. Increased levels of phosphorylation on Ser-400 also in the presence of EGF, heregulin, IGF, PMA and FBS. Phosphorylation at this site by CDK2 is ligand-independent, and increases nuclear translocation and transcriptional activity. Phosphorylation at Ser-163 and Ser-294, but not at Ser-191, is impaired during the G(2)/M phase of the cell cycle. Phosphorylation on Ser-345 by ERK1/2 MAPK is required for interaction with SP1. In terms of processing, sumoylation is hormone-dependent and represses transcriptional activity. Sumoylation on all three sites is enhanced by PIAS3. Desumoylated by SENP1. Sumoylation on Lys-388, the main site of sumoylation, is repressed by ubiquitination on the same site, and modulated by phosphorylation at Ser-294. Post-translationally, ubiquitination is hormone-dependent and represses sumoylation on the same site. Promoted by MAPK-mediated phosphorylation on Ser-294. Ubiquitinated by UBR5, leading to its degradation: UBR5 specifically recognizes and binds ligand-bound PGR when it is not associated with coactivators (NCOAs). In presence of NCOAs, the UBR5-degron is not accessible, preventing its ubiquitination and degradation. Palmitoylated by ZDHHC7 and ZDHHC21. Palmitoylation is required for plasma membrane targeting and for rapid intracellular signaling via ERK and AKT kinases and cAMP generation. As to expression, expression of isoform A and isoform B in mammary epithelial cells is temporally and spatially separated during normal mammary gland development. Isoform A and isoform B are expressed in the pituitary. Isoform A and isoform B are differentially expressed in the ovary and oviduct, and the level of expression is dependent on both the cell type and estrous cycle stage.

The protein resides in the nucleus. Its subcellular location is the cytoplasm. Its function is as follows. The steroid hormones and their receptors are involved in the regulation of eukaryotic gene expression and affect cellular proliferation and differentiation in target tissues. Depending on the isoform, progesterone receptor functions as a transcriptional activator or repressor. Ligand-dependent transdominant repressor of steroid hormone receptor transcriptional activity including repression of its isoform B, MR and ER. Transrepressional activity may involve recruitment of corepressor NCOR2. In terms of biological role, transcriptional activator of several progesteron-dependent promoters in a variety of cell types. Involved in activation of SRC-dependent MAPK signaling on hormone stimulation. This is Progesterone receptor (Pgr) from Mus musculus (Mouse).